We begin with the raw amino-acid sequence, 138 residues long: NADPH-dependent 7-cyano-7-deazaguanine reductase (138 aa).

Cys53 functions as the Thioimide intermediate in the catalytic mechanism. The active-site Proton donor is Asp60. Substrate contacts are provided by residues Val75–Leu77 and His94–Glu95.

Belongs to the GTP cyclohydrolase I family. QueF type 1 subfamily.

The protein resides in the cytoplasm. It carries out the reaction 7-aminomethyl-7-carbaguanine + 2 NADP(+) = 7-cyano-7-deazaguanine + 2 NADPH + 3 H(+). It participates in tRNA modification; tRNA-queuosine biosynthesis. In terms of biological role, catalyzes the NADPH-dependent reduction of 7-cyano-7-deazaguanine (preQ0) to 7-aminomethyl-7-deazaguanine (preQ1). This Gloeothece citriformis (strain PCC 7424) (Cyanothece sp. (strain PCC 7424)) protein is NADPH-dependent 7-cyano-7-deazaguanine reductase.